The chain runs to 531 residues: Peptide chain release factor 3 (531 aa).

The 269-residue stretch at 10 to 278 (ARRRTFAIIS…DFVEHAPGPL (269 aa)) folds into the tr-type G domain. Residues 19-26 (SHPDAGKT), 87-91 (DTPGH), and 141-144 (NKLD) contribute to the GTP site.

Belongs to the TRAFAC class translation factor GTPase superfamily. Classic translation factor GTPase family. PrfC subfamily.

The protein resides in the cytoplasm. Functionally, increases the formation of ribosomal termination complexes and stimulates activities of RF-1 and RF-2. It binds guanine nucleotides and has strong preference for UGA stop codons. It may interact directly with the ribosome. The stimulation of RF-1 and RF-2 is significantly reduced by GTP and GDP, but not by GMP. The chain is Peptide chain release factor 3 from Thioalkalivibrio sulfidiphilus (strain HL-EbGR7).